Here is a 270-residue protein sequence, read N- to C-terminus: Thiamine thiazole synthase (270 aa).

Residues Ala-39, 58-59 (EQ), Gly-66, and Leu-130 each bind NAD(+). 2,3-didehydroalanine (Cys) is present on Cys-159. Residue Asp-161 coordinates NAD(+). Fe cation is bound by residues Asp-161 and His-176. Residue Ile-223 coordinates NAD(+). Arg-233 serves as a coordination point for glycine.

The protein belongs to the THI4 family. Homooctamer; tetramer of dimers. It depends on Fe(2+) as a cofactor. In terms of processing, during the catalytic reaction, a sulfide is transferred from Cys-159 to a reaction intermediate, generating a dehydroalanine residue.

The enzyme catalyses [ADP-thiazole synthase]-L-cysteine + glycine + NAD(+) = [ADP-thiazole synthase]-dehydroalanine + ADP-5-ethyl-4-methylthiazole-2-carboxylate + nicotinamide + 3 H2O + 2 H(+). Its pathway is cofactor biosynthesis; thiamine diphosphate biosynthesis. Involved in biosynthesis of the thiamine precursor thiazole. Catalyzes the conversion of NAD and glycine to adenosine diphosphate 5-(2-hydroxyethyl)-4-methylthiazole-2-carboxylic acid (ADT), an adenylated thiazole intermediate. The reaction includes an iron-dependent sulfide transfer from a conserved cysteine residue of the protein to a thiazole intermediate. The enzyme can only undergo a single turnover, which suggests it is a suicide enzyme. The protein is Thiamine thiazole synthase of Aeropyrum pernix (strain ATCC 700893 / DSM 11879 / JCM 9820 / NBRC 100138 / K1).